A 317-amino-acid polypeptide reads, in one-letter code: Inositol oxygenase 4 (317 aa).

Residues Arg-58 and 115–117 (DES) contribute to the substrate site. His-128, His-153, and Asp-154 together coordinate Fe cation. Substrate contacts are provided by residues Lys-157 and 174–175 (GD). Residues His-226, His-252, and Asp-285 each coordinate Fe cation. 252-253 (HS) provides a ligand contact to substrate.

This sequence belongs to the myo-inositol oxygenase family. It depends on Fe cation as a cofactor. As to expression, expressed in flowers, leaves, siliques, and to a lesser extent in roots.

It is found in the cytoplasm. It catalyses the reaction myo-inositol + O2 = D-glucuronate + H2O + H(+). The protein operates within polyol metabolism; myo-inositol degradation into D-glucuronate; D-glucuronate from myo-inositol: step 1/1. Its function is as follows. Catalyzes the oxygenative cleavage of myo-inositol to D-glucuronate. Involved in the biosynthesis of UDP-glucuronic acid (UDP-GlcA), providing nucleotide sugars for cell-wall polymers. May be also involved in plant ascorbate biosynthesis. In Arabidopsis thaliana (Mouse-ear cress), this protein is Inositol oxygenase 4 (MIOX4).